A 236-amino-acid chain; its full sequence is Concanavalin-Ma (236 aa).

Residues Glu8 and Asp10 each coordinate Mn(2+). The Ca(2+) site is built by Asp10, Tyr12, Asn14, and Asp19. Position 12 (Tyr12) interacts with a carbohydrate. Residues Asp19 and His24 each coordinate Mn(2+). 98 to 99 (LY) contacts a carbohydrate. Asp207 provides a ligand contact to Ca(2+). Arg227 is an a carbohydrate binding site.

Belongs to the leguminous lectin family. In terms of assembly, homotetramer.

Glucose/D-mannose specific lectin. The protein is Concanavalin-Ma of Canavalia rosea (Beach bean).